A 334-amino-acid polypeptide reads, in one-letter code: Rhomboid-like protein 14, mitochondrial (334 aa).

The N-terminal 87 residues, 1–87 (MENFGEGRRS…RLFLSAFYHV (87 aa)), are a transit peptide targeting the mitochondrion. 4 consecutive transmembrane segments (helical) span residues 114 to 134 (EFAS…LLLA), 146 to 166 (AYYN…KVVL), 176 to 196 (VYGI…LVQM), and 197 to 217 (FVPN…IIYL). The Nucleophile role is filled by Ser-156. The active-site Charge relay system is His-206. Residues 273–302 (GPGIWRCQSCTYDNSGWLSACEMCGSGRAR) form a RanBP2-type zinc finger.

It belongs to the peptidase S54 family.

It is found in the mitochondrion membrane. Functionally, probable rhomboid-type serine protease that catalyzes intramembrane proteolysis. May function in the heat-shock response pathway. The polypeptide is Rhomboid-like protein 14, mitochondrial (Arabidopsis thaliana (Mouse-ear cress)).